A 400-amino-acid polypeptide reads, in one-letter code: Formate-dependent phosphoribosylglycinamide formyltransferase (400 aa).

N(1)-(5-phospho-beta-D-ribosyl)glycinamide is bound by residues 22–23 (EL) and E82. Residues R115, K157, 162–167 (SSGKGQ), 197–200 (EGFV), and E205 contribute to the ATP site. In terms of domain architecture, ATP-grasp spans 120 to 315 (RLAAETLGLP…EFELHARAIL (196 aa)). Mg(2+)-binding residues include E274 and E286. N(1)-(5-phospho-beta-D-ribosyl)glycinamide-binding positions include D293, K362, and 369–370 (RR).

Belongs to the PurK/PurT family. Homodimer.

It carries out the reaction N(1)-(5-phospho-beta-D-ribosyl)glycinamide + formate + ATP = N(2)-formyl-N(1)-(5-phospho-beta-D-ribosyl)glycinamide + ADP + phosphate + H(+). The protein operates within purine metabolism; IMP biosynthesis via de novo pathway; N(2)-formyl-N(1)-(5-phospho-D-ribosyl)glycinamide from N(1)-(5-phospho-D-ribosyl)glycinamide (formate route): step 1/1. Its function is as follows. Involved in the de novo purine biosynthesis. Catalyzes the transfer of formate to 5-phospho-ribosyl-glycinamide (GAR), producing 5-phospho-ribosyl-N-formylglycinamide (FGAR). Formate is provided by PurU via hydrolysis of 10-formyl-tetrahydrofolate. The sequence is that of Formate-dependent phosphoribosylglycinamide formyltransferase from Mycolicibacterium vanbaalenii (strain DSM 7251 / JCM 13017 / BCRC 16820 / KCTC 9966 / NRRL B-24157 / PYR-1) (Mycobacterium vanbaalenii).